We begin with the raw amino-acid sequence, 424 residues long: Serine--tRNA ligase (424 aa).

233-235 (TAE) is a binding site for L-serine. Residue 264–266 (RKE) coordinates ATP. Glutamate 287 is an L-serine binding site. 351–354 (EISS) serves as a coordination point for ATP. Serine 386 serves as a coordination point for L-serine.

This sequence belongs to the class-II aminoacyl-tRNA synthetase family. Type-1 seryl-tRNA synthetase subfamily. In terms of assembly, homodimer. The tRNA molecule binds across the dimer.

The protein localises to the cytoplasm. It carries out the reaction tRNA(Ser) + L-serine + ATP = L-seryl-tRNA(Ser) + AMP + diphosphate + H(+). The catalysed reaction is tRNA(Sec) + L-serine + ATP = L-seryl-tRNA(Sec) + AMP + diphosphate + H(+). It functions in the pathway aminoacyl-tRNA biosynthesis; selenocysteinyl-tRNA(Sec) biosynthesis; L-seryl-tRNA(Sec) from L-serine and tRNA(Sec): step 1/1. Functionally, catalyzes the attachment of serine to tRNA(Ser). Is also able to aminoacylate tRNA(Sec) with serine, to form the misacylated tRNA L-seryl-tRNA(Sec), which will be further converted into selenocysteinyl-tRNA(Sec). This chain is Serine--tRNA ligase, found in Elusimicrobium minutum (strain Pei191).